Here is a 204-residue protein sequence, read N- to C-terminus: FMN-dependent NADH:quinone oxidoreductase 1 (204 aa).

FMN is bound by residues Ser10 and Ser15–Ser17.

Belongs to the azoreductase type 1 family. In terms of assembly, homodimer. FMN is required as a cofactor.

The catalysed reaction is 2 a quinone + NADH + H(+) = 2 a 1,4-benzosemiquinone + NAD(+). It catalyses the reaction N,N-dimethyl-1,4-phenylenediamine + anthranilate + 2 NAD(+) = 2-(4-dimethylaminophenyl)diazenylbenzoate + 2 NADH + 2 H(+). Quinone reductase that provides resistance to thiol-specific stress caused by electrophilic quinones. Functionally, also exhibits azoreductase activity. Catalyzes the reductive cleavage of the azo bond in aromatic azo compounds to the corresponding amines. This is FMN-dependent NADH:quinone oxidoreductase 1 from Rhizobium etli (strain ATCC 51251 / DSM 11541 / JCM 21823 / NBRC 15573 / CFN 42).